The primary structure comprises 139 residues: Holo-[acyl-carrier-protein] synthase (139 aa).

2 residues coordinate Mg(2+): D8 and E61.

This sequence belongs to the P-Pant transferase superfamily. AcpS family. Requires Mg(2+) as cofactor.

The protein localises to the cytoplasm. It carries out the reaction apo-[ACP] + CoA = holo-[ACP] + adenosine 3',5'-bisphosphate + H(+). Its function is as follows. Transfers the 4'-phosphopantetheine moiety from coenzyme A to a Ser of acyl-carrier-protein. The polypeptide is Holo-[acyl-carrier-protein] synthase (Rhodopseudomonas palustris (strain BisB5)).